Consider the following 28-residue polypeptide: Small integral membrane protein 47 (28 aa).

A helical membrane pass occupies residues valine 7–asparagine 24.

The protein resides in the membrane. The polypeptide is Small integral membrane protein 47 (Homo sapiens (Human)).